A 539-amino-acid chain; its full sequence is Eukaryotic translation initiation factor 3 subunit L (539 aa).

A PCI domain is found at 302 to 514 (TFSSILLYIQ…IHIADTKVSH (213 aa)).

This sequence belongs to the eIF-3 subunit L family. In terms of assembly, component of the eukaryotic translation initiation factor 3 (eIF-3) complex.

The protein localises to the cytoplasm. Component of the eukaryotic translation initiation factor 3 (eIF-3) complex, which is involved in protein synthesis of a specialized repertoire of mRNAs and, together with other initiation factors, stimulates binding of mRNA and methionyl-tRNAi to the 40S ribosome. The eIF-3 complex specifically targets and initiates translation of a subset of mRNAs involved in cell proliferation. The protein is Eukaryotic translation initiation factor 3 subunit L of Anopheles gambiae (African malaria mosquito).